Reading from the N-terminus, the 1168-residue chain is Homeodomain-interacting protein kinase 2 (1168 aa).

The residue at position 16 (serine 16) is a Phosphoserine. Residue lysine 32 forms a Glycyl lysine isopeptide (Lys-Gly) (interchain with G-Cter in SUMO); alternate linkage. Lysine 32 participates in a covalent cross-link: Glycyl lysine isopeptide (Lys-Gly) (interchain with G-Cter in SUMO2); alternate. The segment at 97-230 (SASSTSVTGQ…TNEIVAIKIL (134 aa)) is transcriptional corepression. 2 positions are modified to phosphoserine: serine 118 and serine 135. The residue at position 141 (threonine 141) is a Phosphothreonine. The interaction with DAXX stretch occupies residues 189 to 520 (HEVLCSMTNT…DADKRITPIE (332 aa)). The Protein kinase domain occupies 199–527 (YEVLEFLGRG…PIETLNHPFV (329 aa)). Residues 205 to 213 (LGRGTFGQV) and lysine 228 contribute to the ATP site. Residues threonine 252 and threonine 273 each carry the phosphothreonine modification. The Proton acceptor role is filled by aspartate 324. Tyrosine 361 bears the Phosphotyrosine mark. Position 441 is a phosphoserine (serine 441). Phosphothreonine occurs at positions 482, 517, and 566. The segment at 539–816 (THVKSCFQNM…KENTPPRCAM (278 aa)) is interaction with SKI and SMAD1. Positions 595-772 (PSAASMAAVA…MRQQPTSTTS (178 aa)) are interaction with DAZAP2. 2 positions are modified to phosphoserine: serine 607 and serine 641. Threonine 660 is modified (phosphothreonine). The interaction with POU4F1 stretch occupies residues 724–869 (RNTHAHGSHY…ITISSDTDEE (146 aa)). Positions 746 to 848 (HVTLPAAQPL…TRERQRQTIV (103 aa)) are interaction with CTBP1. An interaction with HMGA1 region spans residues 759-869 (VAHVMRQQPT…ITISSDTDEE (111 aa)). Residues 764–820 (RQQPTSTTSSRKSKQHQPSMRNVSTCEVTSSQSTSSPQRSKRVKENTPPRCAMVHSS) form a disordered region. The span at 765–791 (QQPTSTTSSRKSKQHQPSMRNVSTCEV) shows a compositional bias: polar residues. A Nuclear localization signal 1 (NLS1) motif is present at residues 774-777 (RKSK). Serine 787 and serine 799 each carry phosphoserine. Over residues 792 to 801 (TSSQSTSSPQ) the composition is skewed to low complexity. The short motif at 804-807 (KRVK) is the Nuclear localization signal 2 (NLS2) element. An interaction with TP53 and TP73 region spans residues 812 to 907 (PRCAMVHSSP…YSDSSSNTSP (96 aa)). The segment at 845-879 (QTIVIPDTPSPTVSVITISSDTDEEEEQKHAPTST) is interaction with UBE2I. Positions 845–952 (QTIVIPDTPS…PLKTQASEVL (108 aa)) are localization to nuclear speckles. Residues 845–952 (QTIVIPDTPS…PLKTQASEVL (108 aa)) are required for localization to nuclear speckles. The interval 854–876 (SPTVSVITISSDTDEEEEQKHAP) is interaction with UBL1. The interval 856-880 (TVSVITISSDTDEEEEQKHAPTSTV) is SUMO interaction motifs (SIM); required for nuclear localization and kinase activity. The tract at residues 894–936 (HDSPYSDSSSNTSPYSVQQRTGHNGTNTLDTKGALENHCTGNP) is disordered. Low complexity predominate over residues 895 to 909 (DSPYSDSSSNTSPYS). Phosphoserine is present on serine 906. An interaction with AXIN1 region spans residues 907 to 1022 (PYSVQQRTGH…LSQAQPHMAT (116 aa)). Residues 910–923 (VQQRTGHNGTNTLD) show a composition bias toward polar residues. Glycyl lysine isopeptide (Lys-Gly) (interchain with G-Cter in SUMO2) cross-links involve residues lysine 925 and lysine 945. Residues 956–1168 (DSLGPAVSTG…PAKVNQYPYI (213 aa)) are autoinhibitory domain (AID). A disordered region spans residues 960 to 1030 (PAVSTGHHSS…ATDRTGSHRR (71 aa)). Phosphoserine is present on serine 963. 2 stretches are compositionally biased toward low complexity: residues 965–991 (GHHS…GSSS) and 998–1018 (QQRP…QAQP). Phosphoserine is present on residues serine 1014, serine 1125, and serine 1158. A Glycyl lysine isopeptide (Lys-Gly) (interchain with G-Cter in SUMO) cross-link involves residue lysine 1161.

It belongs to the protein kinase superfamily. CMGC Ser/Thr protein kinase family. HIPK subfamily. Interacts with CREB1, SIAH1, WSB1, CBX4, TRADD, p53/TP53, TP73, TP63, CREBBP, DAXX, P53DINP1, SKI, SMAD1, SMAD2 and SMAD3, but not SMAD4. Interacts with ATF1, PML, RUNX1, EP300, NKX1-2, NKX2-5, UBE2I, HMGA1, CTBP1, AXIN1, NLK, MYB, POU4F1, POU4F2, POU4F3, UBE2I, UBL1 and ZBTB4. Probably part of a complex consisting of p53/TP53, HIPK2 and AXIN1. Interacts with SP100; positively regulates TP53-dependent transcription. Interacts with DAZAP2; the interaction results in phosphorylation of DAZAP2 which causes localization of DAZAP2 to the nucleus, reduces interaction of DAZAP2 with HIPK2 and prevents DAZAP2-dependent degradation of HIPK2. Interacts with SIAH1; the interaction is promoted by DAZAP2 and results in SIAH1-mediated ubiquitination and subsequent proteasomal degradation of HIPK2. Post-translationally, autophosphorylation at Tyr-361 in the activation loop activates the kinase and promotes nuclear localization. Sumoylated. When conjugated it is directed to nuclear speckles. Desumoylated by SENP1. Sumoylation on Lys-32 is promoted by the E3 SUMO-protein ligase CBX4. In terms of processing, ubiquitinated by FBXO3, WSB1 and SIAH1, leading to rapid proteasome-dependent degradation. The degradation mediated by FBXO3, but not ubiquitination, is prevented in the presence of PML. The degradation mediated by WSB1 and SIAH1 is reversibly reduced upon DNA damage. Post-translationally, cleaved at Asp-895 and Asp-956 by CASP6 in a p53/TP53-dependent manner. The cleaved form lacks the autoinhibitory C-terminal domain (AID), resulting in a hyperactive kinase, which potentiates p53/TP53 Ser-46 phosphorylation and subsequent activation of the cell death machinery.

It localises to the nucleus. The protein resides in the PML body. It is found in the cytoplasm. The enzyme catalyses L-seryl-[protein] + ATP = O-phospho-L-seryl-[protein] + ADP + H(+). The catalysed reaction is L-threonyl-[protein] + ATP = O-phospho-L-threonyl-[protein] + ADP + H(+). Its function is as follows. Serine/threonine-protein kinase involved in transcription regulation, p53/TP53-mediated cellular apoptosis and regulation of the cell cycle. Acts as a corepressor of several transcription factors, including SMAD1 and POU4F1/Brn3a and probably NK homeodomain transcription factors. Phosphorylates PDX1, ATF1, PML, p53/TP53, CREB1, CTBP1, CBX4, RUNX1, EP300, CTNNB1, HMGA1, ZBTB4 and DAZAP2. Inhibits cell growth and promotes apoptosis through the activation of p53/TP53 both at the transcription level and at the protein level (by phosphorylation and indirect acetylation). The phosphorylation of p53/TP53 may be mediated by a p53/TP53-HIPK2-AXIN1 complex. Involved in the response to hypoxia by acting as a transcriptional co-suppressor of HIF1A. Mediates transcriptional activation of TP73. In response to TGFB, cooperates with DAXX to activate JNK. Negative regulator through phosphorylation and subsequent proteasomal degradation of CTNNB1 and the antiapoptotic factor CTBP1. In the Wnt/beta-catenin signaling pathway acts as an intermediate kinase between MAP3K7/TAK1 and NLK to promote the proteasomal degradation of MYB. Phosphorylates CBX4 upon DNA damage and promotes its E3 SUMO-protein ligase activity. Activates CREB1 and ATF1 transcription factors by phosphorylation in response to genotoxic stress. In response to DNA damage, stabilizes PML by phosphorylation. PML, HIPK2 and FBXO3 may act synergically to activate p53/TP53-dependent transactivation. Promotes angiogenesis, and is involved in erythroid differentiation, especially during fetal liver erythropoiesis. Phosphorylation of RUNX1 and EP300 stimulates EP300 transcription regulation activity. Triggers ZBTB4 protein degradation in response to DNA damage. In response to DNA damage, phosphorylates DAZAP2 which localizes DAZAP2 to the nucleus, reduces interaction of DAZAP2 with HIPK2 and prevents DAZAP2-dependent ubiquitination of HIPK2 by E3 ubiquitin-protein ligase SIAH1 and subsequent proteasomal degradation. Modulates HMGA1 DNA-binding affinity. In response to high glucose, triggers phosphorylation-mediated subnuclear localization shifting of PDX1. Involved in the regulation of eye size, lens formation and retinal lamination during late embryogenesis. This chain is Homeodomain-interacting protein kinase 2 (Hipk2), found in Mesocricetus auratus (Golden hamster).